Here is a 312-residue protein sequence, read N- to C-terminus: Pyridoxal kinase (312 aa).

The residue at position 1 (Met-1) is an N-acetylmethionine. Positions 12 and 47 each coordinate pyridoxal. Thr-47 contacts pyridoxal 5'-phosphate. Ser-59 is subject to Phosphoserine. Asp-113 serves as a coordination point for ATP. Asp-113 provides a ligand contact to Na(+). Asp-118 provides a ligand contact to Mg(2+). Thr-148 contacts Na(+). Asn-150–Glu-153 is an ATP binding site. Phosphoserine is present on Ser-164. Thr-186 is a Na(+) binding site. Thr-186–Ser-187 contacts ATP. Residue Ser-213 is modified to Phosphoserine. ATP-binding positions include Val-226–Ala-228 and Thr-233. Gly-234–Asp-235 contacts pyridoxal 5'-phosphate. Residue Asp-235 is the Proton acceptor of the active site. A Phosphoserine modification is found at Ser-285.

It belongs to the pyridoxine kinase family. In terms of assembly, homodimer. Mg(2+) serves as cofactor. Requires Zn(2+) as cofactor. The cofactor is Co(2+). It depends on Mn(2+) as a cofactor. As to expression, ubiquitous. Highly expressed in testis. In terms of tissue distribution, in adult testis and spermatozoa.

It localises to the cytoplasm. It is found in the cytosol. It carries out the reaction pyridoxal + ATP = pyridoxal 5'-phosphate + ADP + H(+). The enzyme catalyses pyridoxamine + ATP = pyridoxamine 5'-phosphate + ADP + H(+). It catalyses the reaction pyridoxine + ATP = pyridoxine 5'-phosphate + ADP + H(+). It functions in the pathway cofactor metabolism; pyridoxal 5'-phosphate salvage; pyridoxal 5'-phosphate from pyridoxal: step 1/1. Its pathway is cofactor metabolism; pyridoxal 5'-phosphate salvage; pyridoxine 5'-phosphate from pyridoxine: step 1/1. It participates in cofactor metabolism; pyridoxal 5'-phosphate salvage; pyridoxamine 5'-phosphate from pyridoxamine: step 1/1. Catalytic activity is inhibited competitively by 4-deoxypyridoxine, and is also inhibited by the benzodiazepine receptor ligands 1012S and ethyl-beta-carboline-3-carboxylate. Inhibited by ginkgotoxin, theophylline, lamotrigine, enprofylline, theobromine, and caffeine. Activity is increased in the presence of K(+)or Na(+). In terms of biological role, catalyzes the phosphorylation of the dietary vitamin B6 vitamers pyridoxal (PL), pyridoxine (PN) and pyridoxamine (PM) to form pyridoxal 5'-phosphate (PLP), pyridoxine 5'-phosphate (PNP) and pyridoxamine 5'-phosphate (PMP), respectively. PLP is the active form of vitamin B6, and acts as a cofactor for over 140 different enzymatic reactions. The polypeptide is Pyridoxal kinase (Homo sapiens (Human)).